The chain runs to 509 residues: MFVEGFRVESPRVRYGDGEIESEYRYDTTEVVAPPSPEKGWVVRPKSVTYHFKTTTTVPKLGVMLVGWGGNNGTTLTAGVIANREGISWATKEKVHKANYFGSLTQSSTIRVGSYNGEEIYAPFKSLVPMVNPNDIVFGGWDISSMNLADAMTRARVLDIDLQKQLRHHMESMVPLPGVYNPDFIAANQGSRANNVIKGTKKEQVEQVKKDIREFKEKSKVDKVVVLWTANTERYSNVVAGMNDTMDNLLASLDKDEPEMSPSTLYAIACVMEGVPFINGSPQNTFVPGLIELAIKKNSVIGGDDFKSGQTKMKSVLVDFLVGAGIKPTSIASYNHLGNNDGMNLSAPQTFRSKEISKSGVVDDMVSSNAILYEPGEHPDHVIVIKYIPYVGDSKRAMDEYTSEIFMGGKNTIVLHNTCEDSLLAAPIILDLVLLAELSTRIQLKAEDQDKYHSFHPVATILSYLSKAPLVPPGTPVVNALAKQRAMLENILRACVGLAPENNMMLEYK.

This sequence belongs to the myo-inositol 1-phosphate synthase family. NAD(+) serves as cofactor. In terms of tissue distribution, highly expressed in anthers, but transcripts are undetectable in roots, leaves, flowers and embryos.

The protein localises to the cytoplasm. It carries out the reaction D-glucose 6-phosphate = 1D-myo-inositol 3-phosphate. The protein operates within polyol metabolism; myo-inositol biosynthesis; myo-inositol from D-glucose 6-phosphate: step 1/2. In terms of biological role, key enzyme in myo-inositol biosynthesis pathway that catalyzes the conversion of glucose 6-phosphate to 1-myo-inositol 1-phosphate in a NAD-dependent manner. Is a key enzyme in the phytic acid biosynthesis pathway in seeds. This Oryza sativa subsp. japonica (Rice) protein is Inositol-3-phosphate synthase 1.